A 274-amino-acid polypeptide reads, in one-letter code: Elongation factor Ts (274 aa).

An involved in Mg(2+) ion dislocation from EF-Tu region spans residues threonine 82 to valine 85.

Belongs to the EF-Ts family.

The protein localises to the cytoplasm. Associates with the EF-Tu.GDP complex and induces the exchange of GDP to GTP. It remains bound to the aminoacyl-tRNA.EF-Tu.GTP complex up to the GTP hydrolysis stage on the ribosome. The polypeptide is Elongation factor Ts (Christiangramia forsetii (strain DSM 17595 / CGMCC 1.15422 / KT0803) (Gramella forsetii)).